The primary structure comprises 168 residues: MSQTVHFQGNPVTVANVIPQAGSKAQAFTLVAKDLSDVSLSQYAGKRKVLNIFPSIDTGVCAASVRKFNQLATEVENTVVLCVSADLPFAQSRFCGAEGLSNVITLSTLRNNEFLKNYGVEIVDGPLKGLAARAVIVLDENDNVIFSQLVDEITHEPDYDAALNVLKA.

Positions 19–168 (PQAGSKAQAF…YDAALNVLKA (150 aa)) constitute a Thioredoxin domain. The active-site Cysteine sulfenic acid (-SOH) intermediate is Cys61. A disulfide bridge connects residues Cys61 and Cys95.

It belongs to the peroxiredoxin family. Tpx subfamily. As to quaternary structure, homodimer.

The enzyme catalyses a hydroperoxide + [thioredoxin]-dithiol = an alcohol + [thioredoxin]-disulfide + H2O. Functionally, thiol-specific peroxidase that catalyzes the reduction of hydrogen peroxide and organic hydroperoxides to water and alcohols, respectively. Plays a role in cell protection against oxidative stress by detoxifying peroxides. In Salmonella typhimurium (strain LT2 / SGSC1412 / ATCC 700720), this protein is Thiol peroxidase.